The primary structure comprises 742 residues: ATP-dependent RNA helicase DBP7 (742 aa).

The tract at residues 45–100 is disordered; sequence GKTVSRKRKANTTGDEGIIPGRGENSIKKLHKESSYSSEEQEKYKGRNAHNTQGRT. The Q motif signature appears at 143 to 172; the sequence is DQFASLGVTSLLVSHLEQKMRIKKPTSIQK. One can recognise a Helicase ATP-binding domain in the interval 178–372; that stretch reads IIGNAGKNDF…NVALKDYKLI (195 aa). Residue 191-198 participates in ATP binding; that stretch reads AQTGSGKT. Positions 307 to 310 match the DEAD box motif; it reads DEGD. A Helicase C-terminal domain is found at 405–605; that stretch reads TLAATLNNIT…ILMPAFKDVN (201 aa). Residues 701 to 726 are disordered; the sequence is AMGLQSSKDGNSEKKPTKENSKNKMF. Over residues 710–722 the composition is skewed to basic and acidic residues; it reads GNSEKKPTKENSK.

It belongs to the DEAD box helicase family. DDX31/DBP7 subfamily.

Its subcellular location is the nucleus. It localises to the nucleolus. It catalyses the reaction ATP + H2O = ADP + phosphate + H(+). ATP-binding RNA helicase involved in the biogenesis of 60S ribosomal subunits and is required for the normal formation of 25S and 5.8S rRNAs. This chain is ATP-dependent RNA helicase DBP7 (DBP7), found in Saccharomyces cerevisiae (strain YJM789) (Baker's yeast).